A 922-amino-acid polypeptide reads, in one-letter code: Neuropilin-1 (922 aa).

A signal peptide spans 1-21 (MERGLPLLCATLALALALAGA). Topologically, residues 22–855 (FRSDKCGGTI…PGNVLKTLDP (834 aa)) are extracellular. Disulfide bonds link cysteine 27-cysteine 54, cysteine 82-cysteine 104, and cysteine 147-cysteine 173. CUB domains lie at 27–141 (CGGT…YEIF) and 147–265 (CSQN…YSVL). The N-linked (GlcNAc...) asparagine glycan is linked to asparagine 150. Residues glutamate 195, aspartate 209, and aspartate 250 each coordinate Ca(2+). Cysteine 206 and cysteine 228 form a disulfide bridge. N-linked (GlcNAc...) asparagine glycosylation is found at asparagine 261, asparagine 300, and asparagine 522. 2 cysteine pairs are disulfide-bonded: cysteine 275–cysteine 424 and cysteine 431–cysteine 583. 2 F5/8 type C domains span residues 275–424 (CMEA…VYGC) and 431–583 (CSGM…LLGC). O-linked (Xyl...) (chondroitin sulfate) serine; alternate glycosylation occurs at serine 612. A glycan (O-linked (Xyl...) (heparan sulfate) serine; alternate) is linked at serine 612. Residues 645–811 (TYGFNCEFGW…NHIPQEDCAK (167 aa)) form the MAM domain. Serine 829 is a glycosylation site (O-linked (Xyl...) (chondroitin sulfate) serine). Asparagine 841 carries an N-linked (GlcNAc...) asparagine glycan. Residues 856–880 (ILITIIAMSALGVLLGAVCGVVLYC) form a helical membrane-spanning segment. At 881–922 (ACWHNGMSERNLSALENYNFELVDGVKLKKDKLNPQSNYSEA) the chain is on the cytoplasmic side. Serine 893 is subject to Phosphoserine.

It belongs to the neuropilin family. Homodimer, and heterodimer with NRP2. Binds PLXNB1. Interacts with FER. Interacts with VEGFA. Interacts with ABCB8/MITOSUR in mitochondria. As to expression, found in the embryonic nervous system. Expressed in dorsal root ganglia.

It is found in the mitochondrion membrane. The protein localises to the cell membrane. Its subcellular location is the cytoplasm. In terms of biological role, cell-surface receptor involved in the development of the cardiovascular system, in angiogenesis, in the formation of certain neuronal circuits and in organogenesis outside the nervous system. Mediates the chemorepulsant activity of semaphorins. Recognizes a C-end rule (CendR) motif R/KXXR/K on its ligands which causes cellular internalization and vascular leakage. It binds to semaphorin 3A, the PLGF-2 isoform of PGF, the VEGF165 isoform of VEGFA and VEGFB. Coexpression with KDR results in increased VEGF165 binding to KDR as well as increased chemotaxis. Regulates VEGF-induced angiogenesis. Binding to VEGFA initiates a signaling pathway needed for motor neuron axon guidance and cell body migration, including for the caudal migration of facial motor neurons from rhombomere 4 to rhombomere 6 during embryonic development. Regulates mitochondrial iron transport via interaction with ABCB8/MITOSUR. This is Neuropilin-1 (Nrp1) from Rattus norvegicus (Rat).